The primary structure comprises 454 residues: Bifunctional protein GlmU (454 aa).

The segment at 1 to 226 (MALNVVILAA…AIEVEGANNR (226 aa)) is pyrophosphorylase. UDP-N-acetyl-alpha-D-glucosamine is bound by residues 8–11 (LAAG), Lys22, Gln73, 78–79 (GT), 100–102 (YGD), Gly137, Glu151, Asn166, and Asn224. Residue Asp102 coordinates Mg(2+). Residue Asn224 participates in Mg(2+) binding. Positions 227-247 (VQLAQLERAYQAREAEKLMLA) are linker. Positions 248–454 (GANLRDPHRI…DWKRPVKIKK (207 aa)) are N-acetyltransferase. UDP-N-acetyl-alpha-D-glucosamine is bound by residues Arg330 and Lys348. His360 acts as the Proton acceptor in catalysis. UDP-N-acetyl-alpha-D-glucosamine-binding residues include Tyr363 and Asn374. Residues Ala377, 383-384 (NY), Ser402, Ala420, and Arg437 each bind acetyl-CoA.

In the N-terminal section; belongs to the N-acetylglucosamine-1-phosphate uridyltransferase family. This sequence in the C-terminal section; belongs to the transferase hexapeptide repeat family. Homotrimer. The cofactor is Mg(2+).

It localises to the cytoplasm. It carries out the reaction alpha-D-glucosamine 1-phosphate + acetyl-CoA = N-acetyl-alpha-D-glucosamine 1-phosphate + CoA + H(+). The catalysed reaction is N-acetyl-alpha-D-glucosamine 1-phosphate + UTP + H(+) = UDP-N-acetyl-alpha-D-glucosamine + diphosphate. Its pathway is nucleotide-sugar biosynthesis; UDP-N-acetyl-alpha-D-glucosamine biosynthesis; N-acetyl-alpha-D-glucosamine 1-phosphate from alpha-D-glucosamine 6-phosphate (route II): step 2/2. It participates in nucleotide-sugar biosynthesis; UDP-N-acetyl-alpha-D-glucosamine biosynthesis; UDP-N-acetyl-alpha-D-glucosamine from N-acetyl-alpha-D-glucosamine 1-phosphate: step 1/1. The protein operates within bacterial outer membrane biogenesis; LPS lipid A biosynthesis. Catalyzes the last two sequential reactions in the de novo biosynthetic pathway for UDP-N-acetylglucosamine (UDP-GlcNAc). The C-terminal domain catalyzes the transfer of acetyl group from acetyl coenzyme A to glucosamine-1-phosphate (GlcN-1-P) to produce N-acetylglucosamine-1-phosphate (GlcNAc-1-P), which is converted into UDP-GlcNAc by the transfer of uridine 5-monophosphate (from uridine 5-triphosphate), a reaction catalyzed by the N-terminal domain. This chain is Bifunctional protein GlmU, found in Shewanella putrefaciens (strain CN-32 / ATCC BAA-453).